The chain runs to 219 residues: Pollen-specific protein SF3 (219 aa).

LIM zinc-binding domains are found at residues 9-109 and 110-167; these read QKCT…TRDK and CNAC…QLFK. The disordered stretch occupies residues 181 to 219; the sequence is VAAPAESETQNTETQNAETQNADTQNADTQNTETQNGSV. Low complexity predominate over residues 185 to 202; the sequence is AESETQNTETQNAETQNA. Residues 203 to 219 show a composition bias toward polar residues; sequence DTQNADTQNTETQNGSV.

Pollen.

Could possibly involved in controlling pollen-specific processes such as male gamete maturation, pollen tube formation, or even fertilization. This chain is Pollen-specific protein SF3 (SF3), found in Helianthus annuus (Common sunflower).